A 285-amino-acid polypeptide reads, in one-letter code: Ribonuclease H1 (285 aa).

The segment at 72-126 is disordered; the sequence is RSSSSPDGSKGQESAHEQKSQAKTSKRPREPLGEGEELPEPGPKHTRQDTEPAAV. The region spanning 135-281 is the RNase H type-1 domain; sequence MGESVIVYTD…ADRLAREGAK (147 aa). Residues D144, E185, D209, and D273 each coordinate Mg(2+).

The protein belongs to the RNase H family. Monomer. Requires Mg(2+) as cofactor.

Its subcellular location is the cytoplasm. It catalyses the reaction Endonucleolytic cleavage to 5'-phosphomonoester.. Its activity is regulated as follows. In the presence of magnesium, manganese is inhibitory. Its function is as follows. Endonuclease that specifically degrades the RNA of RNA-DNA hybrids. Plays a role in RNA polymerase II (RNAp II) transcription termination by degrading R-loop RNA-DNA hybrid formation at G-rich pause sites located downstream of the poly(A) site and behind the elongating RNAp II. The polypeptide is Ribonuclease H1 (Rnaseh1) (Mus musculus (Mouse)).